The primary structure comprises 105 residues: Large ribosomal subunit protein uL22 (105 aa).

The protein belongs to the universal ribosomal protein uL22 family. Part of the 50S ribosomal subunit.

Functionally, this protein binds specifically to 23S rRNA; its binding is stimulated by other ribosomal proteins, e.g. L4, L17, and L20. It is important during the early stages of 50S assembly. It makes multiple contacts with different domains of the 23S rRNA in the assembled 50S subunit and ribosome. In terms of biological role, the globular domain of the protein is located near the polypeptide exit tunnel on the outside of the subunit, while an extended beta-hairpin is found that lines the wall of the exit tunnel in the center of the 70S ribosome. This chain is Large ribosomal subunit protein uL22, found in Sulfurimonas denitrificans (strain ATCC 33889 / DSM 1251) (Thiomicrospira denitrificans (strain ATCC 33889 / DSM 1251)).